A 316-amino-acid chain; its full sequence is Transaldolase A (316 aa).

K131 acts as the Schiff-base intermediate with substrate in catalysis.

It belongs to the transaldolase family. Type 1 subfamily. Homodimer.

It localises to the cytoplasm. The enzyme catalyses D-sedoheptulose 7-phosphate + D-glyceraldehyde 3-phosphate = D-erythrose 4-phosphate + beta-D-fructose 6-phosphate. It participates in carbohydrate degradation; pentose phosphate pathway; D-glyceraldehyde 3-phosphate and beta-D-fructose 6-phosphate from D-ribose 5-phosphate and D-xylulose 5-phosphate (non-oxidative stage): step 2/3. Its function is as follows. Transaldolase is important for the balance of metabolites in the pentose-phosphate pathway. The polypeptide is Transaldolase A (talA) (Escherichia coli O157:H7).